Reading from the N-terminus, the 521-residue chain is MAP kinase-activated protein kinase mak-1 (521 aa).

Acidic residues predominate over residues 1–12; it reads MMFEYEEDEDPM. Residues 1 to 36 are disordered; the sequence is MMFEYEEDEDPMEQQKHEEFKHHSTDHSGSPQENPF. Over residues 13-26 the composition is skewed to basic and acidic residues; that stretch reads EQQKHEEFKHHSTD. A Protein kinase domain is found at 144–405; that stretch reads TISAEIIGIG…IHELMATPLV (262 aa). ATP contacts are provided by residues 150–158 and lysine 173; that span reads IGIGESGKV. Residue aspartate 266 is the Proton acceptor of the active site.

Belongs to the protein kinase superfamily. CAMK Ser/Thr protein kinase family. As to quaternary structure, may interact (via protein kinase domain) with unc-22 (via protein kinase and CRD domains). Mg(2+) is required as a cofactor. Autophosphorylated in vitro. As to expression, expressed in body wall muscles (at protein level). Expressed in intestine.

Its subcellular location is the cytoplasm. The protein resides in the myofibril. The protein localises to the sarcomere. It is found in the a band. The enzyme catalyses L-seryl-[protein] + ATP = O-phospho-L-seryl-[protein] + ADP + H(+). It catalyses the reaction L-threonyl-[protein] + ATP = O-phospho-L-threonyl-[protein] + ADP + H(+). Its function is as follows. Serine/threonine-protein kinase which may play a role in body wall muscle contraction. May phosphorylate unc-22/twitchin. This is MAP kinase-activated protein kinase mak-1 from Caenorhabditis elegans.